The chain runs to 74 residues: Protein SlyX homolog (74 aa).

Belongs to the SlyX family.

This is Protein SlyX homolog from Aliivibrio fischeri (strain ATCC 700601 / ES114) (Vibrio fischeri).